A 144-amino-acid chain; its full sequence is Large ribosomal subunit protein uL15 (144 aa).

The disordered stretch occupies residues 20–49 (GRGIGSGLGKTGGRGHKGQKSRSGGFHKVG). Over residues 21–31 (RGIGSGLGKTG) the composition is skewed to gly residues.

This sequence belongs to the universal ribosomal protein uL15 family. In terms of assembly, part of the 50S ribosomal subunit.

Functionally, binds to the 23S rRNA. This Neisseria meningitidis serogroup A / serotype 4A (strain DSM 15465 / Z2491) protein is Large ribosomal subunit protein uL15.